A 338-amino-acid chain; its full sequence is Fructose-1,6-bisphosphatase class 1 (338 aa).

4 residues coordinate Mg(2+): glutamate 90, aspartate 112, leucine 114, and aspartate 115. Substrate-binding positions include 115–118, asparagine 207, and lysine 273; that span reads DGSS. Position 279 (glutamate 279) interacts with Mg(2+).

Belongs to the FBPase class 1 family. Homotetramer. It depends on Mg(2+) as a cofactor.

Its subcellular location is the cytoplasm. It carries out the reaction beta-D-fructose 1,6-bisphosphate + H2O = beta-D-fructose 6-phosphate + phosphate. It participates in carbohydrate biosynthesis; gluconeogenesis. The sequence is that of Fructose-1,6-bisphosphatase class 1 from Xanthomonas campestris pv. campestris (strain 8004).